A 433-amino-acid chain; its full sequence is Tol-Pal system protein TolB (433 aa).

The first 21 residues, 1 to 21 (MINLFRGLLVVLCFASAMVAA), serve as a signal peptide directing secretion.

This sequence belongs to the TolB family. The Tol-Pal system is composed of five core proteins: the inner membrane proteins TolA, TolQ and TolR, the periplasmic protein TolB and the outer membrane protein Pal. They form a network linking the inner and outer membranes and the peptidoglycan layer.

It localises to the periplasm. Its function is as follows. Part of the Tol-Pal system, which plays a role in outer membrane invagination during cell division and is important for maintaining outer membrane integrity. The polypeptide is Tol-Pal system protein TolB (Pseudomonas syringae pv. tomato (strain ATCC BAA-871 / DC3000)).